Consider the following 817-residue polypeptide: Protein Jade-3 (817 aa).

Residues 1-38 form a disordered region; the sequence is MKRLRNLSSSDSSDNESPSTSFSSCFQHKGKGKCTADD. A compositionally biased stretch (low complexity) spans 8 to 24; the sequence is SSSDSSDNESPSTSFSS. The segment at 202-252 adopts a PHD-type 1 zinc-finger fold; the sequence is DVICDVCRSPDSEEGNDMVFCDRCNICVHQACYGILKVPEGSWLCRTCVLG. A C2HC pre-PHD-type zinc finger spans residues 254-288; it reads HPQCILCPKTGGAMKATRTGTKWAHVSCALWIPEV. The segment at 312–368 adopts a PHD-type 2 zinc-finger fold; that stretch reads LVCSLCKLKTGACIQCSVKSCITAFHVTCAFEHSLEMKTILDEGDEVKFKSYCLKHS. Disordered stretches follow at residues 375–396, 665–689, and 719–817; these read ISEQEEPHKTHSDNRPTESERT, NGVLSSGDRTQRDSSSQTSPGQNSE, and LVRT…SVQR. Residues 379–396 show a composition bias toward basic and acidic residues; the sequence is EEPHKTHSDNRPTESERT. Over residues 667–689 the composition is skewed to polar residues; the sequence is VLSSGDRTQRDSSSQTSPGQNSE. Residues 722–743 show a composition bias toward basic and acidic residues; sequence TTEDLRSSEKPQRRQSVKERLW. Polar residues predominate over residues 747-758; it reads PADTQTSGTPYQ. The span at 777–799 shows a compositional bias: basic and acidic residues; it reads DENKDHMLLRRNSRESPNRDSCR. The segment covering 801–810 has biased composition (basic residues); that stretch reads SRIRGKRKMT.

It belongs to the JADE family. As to quaternary structure, component of the HBO1 complex.

In terms of biological role, scaffold subunit of some HBO1 complexes, which have a histone H4 acetyltransferase activity. The sequence is that of Protein Jade-3 (jade3) from Xenopus tropicalis (Western clawed frog).